Consider the following 1459-residue polypeptide: MAEEQQQPPPQQLDAPQQLPLSAPNPGVALPALVPGLPGTEANALQHKIKNSICKTVQSKVDCILQEVEKFTDLEKLYLYLQLPSGLSSAEKSDQNAMSSSRAQQMHAFSWIRNTLEEHPETSLPKQEVYDEYKSYCDNLGYHPLSAADFGKIMKNVFPNMKARRLGTRGKSKYCYSGLRKKAFVHMPTLPNLDFHKTGDGLEGVEPSGQLQNIDEEVISSACRLVCEWAQKVLSQPFDTVLELAHFLVKSHYIGTKSMAALTVMAAAPAGLKGIPQPSAFIPTAESNSFQPQVKTLPSPIDAKQQLQRKIQKKQQEQKLQSPLPGESSAKKPEGTTANGVANLPNGNPAILSPQPIGIVVAAVPSPIPVQRTRQLVTSPSPMNSPDGKVLPLNVQVVTQHMQSVKQTPKTPQNVPASPGGDRSARHRYPQILPKPANTSALTIRSPTTVLFTSSPIKTAVVPASHMSSLNVVKMTTISLTPSNSNAPLKHSASVSSATGTTEESRIVPQIKNGSVVSLQSPGSRASSTGGTSAVEVKMEPEGSSDEHPLQCQENSEETKAPLTTSSALWGQKSNTDGTVPKPSNEGVTEVKTTKVCDQRTKCKNRCNEILSGISAGNNQSTVTLSVATQNLPFTSTSSPSNGDSVNKDPKICTKSPRKRLSATLQESQVPPVKKPIVEQLSAVTIEGQKPGTVKKDQKVPHSGKTESSTAGAQIPNKVSISVSSQIIEDQPVNPALVTSEPVLEQQTTPSSSPDVKVKLEGSVFLLDRESKSDGSFNRNEWQQVTKDSDFIAASCEHQQDISVMTIAEHPDIHDLEKSVWELEGMPQDTYSQQLHSQIPESSLNEIQAQSSDQLPLQSELKEFESSVSQTNESYFPFDDELTQDSIVEELVLMEQQMSMNNSHSYGNCLGMSLQNQSVTPGAPMSSHASSTHFYHPIHSNGTPIHTPTPTPTPTPTPTPTPTPTSEMIAGSQSLSRESPCSRLAQTTPVDSALGSSRHTPIGTPHSNCSSSVPPSPVECRNPFAFTPISSSMAYHDASIVSSSPVKPMQRPMATHPDKTKLEWMNNGYGGVGNSSVSGHGILPSYQELVEDRFRKPHAFAVPGQSYQSQSRHHDTHFGRLTPVSPVQHQGATVNTNKQEGFAVPAPLDNKGTNSSAGSNFRCRSVSPAVHRQRNLSGSTLYPVSNIPRSNVTPFGSPVTPEVHVFTNVHTDACANNIAQRSQSVPLTVMMQTAFPNALQKQTNSKKITNVLLSKLDSDNDDSVRGLGINNVPSNYTARMNLTQILETSPVFPSANSQNMIDSSTSVYEFQTPSYLTKSNSTDQISFSPGDNQAQSEIGEQQLDFNSTVKDLLSGDNLQTSQQLVGQVASDLTNTASDFSSDIRLSSDLSGSINDLNTLDPNLLFDPGRQQGQDDEATLEELKNDPLFQQICSESMNSMTSSGFEWIESKDHPTVEMLG.

The tract at residues M1 to G27 is disordered. The span at Q12–L21 shows a compositional bias: low complexity. Positions A108–A183 form a DNA-binding region, RFX-type winged-helix. Residues P188–L193 carry the PxLPxI/L motif; mediates interaction with ANKRA2 and RFXANK motif. Disordered regions lie at residues A303–G347, S404–R428, P482–E590, F634–K659, G688–P716, and S918–S1016. 2 stretches are compositionally biased toward polar residues: residues S404–P416 and P482–T502. Positions S521 to A534 are enriched in low complexity. The span at V537–P549 shows a compositional bias: basic and acidic residues. 3 stretches are compositionally biased toward polar residues: residues P562–G578, F634–S645, and T706–P716. The segment covering T947 to T963 has biased composition (pro residues). Residues G971–C1009 are compositionally biased toward polar residues.

This sequence belongs to the RFX family. Interacts (via PxLPxI/L motif) with RFXANK (via ankyrin repeats). Interacts (via PxLPxI/L motif) with ANKRA2 (via ankyrin repeats). As to expression, expressed in spleen and lymph node and to a lower extend in brain (at protein level). Expressed in lymphoid organs and lymphoid cell subsets. Expressed throughout natural killer (NK) cell maturation.

The protein resides in the nucleus. In terms of biological role, transcription factor. Acts as a transcriptional activator by binding to promoter regions of target genes, such as Rec8, Mxd4 and Ddit4. Plays a role in natural killer (NK) cell maintenance and immunity. May play a role in the process of ciliogenesis in the neural tube and neural tube closure. The polypeptide is DNA-binding protein RFX7 (Mus musculus (Mouse)).